A 304-amino-acid polypeptide reads, in one-letter code: Porphobilinogen deaminase (304 aa).

S-(dipyrrolylmethanemethyl)cysteine is present on C240.

The protein belongs to the HMBS family. In terms of assembly, monomer. Requires dipyrromethane as cofactor.

The catalysed reaction is 4 porphobilinogen + H2O = hydroxymethylbilane + 4 NH4(+). It participates in porphyrin-containing compound metabolism; protoporphyrin-IX biosynthesis; coproporphyrinogen-III from 5-aminolevulinate: step 2/4. In terms of biological role, tetrapolymerization of the monopyrrole PBG into the hydroxymethylbilane pre-uroporphyrinogen in several discrete steps. This is Porphobilinogen deaminase from Xanthomonas oryzae pv. oryzae (strain KACC10331 / KXO85).